The chain runs to 452 residues: Probable splicing factor, arginine/serine-rich 7 (452 aa).

2 consecutive RRM domains span residues lysine 10–proline 91 and arginine 163–valine 240. Residues glutamate 258 to glutamate 452 are disordered. The segment covering glutamate 259–arginine 272 has biased composition (basic and acidic residues). The segment covering arginine 273–arginine 290 has biased composition (basic residues). Residues aspartate 291 to arginine 305 show a composition bias toward basic and acidic residues. 3 stretches are compositionally biased toward basic residues: residues lysine 323–arginine 335, lysine 345–aspartate 360, and serine 370–serine 382. The span at arginine 383–serine 421 shows a compositional bias: basic and acidic residues.

The protein belongs to the splicing factor SR family. Extensively phosphorylated on serine residues in the RS domain.

It localises to the nucleus. This is Probable splicing factor, arginine/serine-rich 7 (rsp-7) from Caenorhabditis elegans.